An 888-amino-acid chain; its full sequence is Alanine--tRNA ligase (888 aa).

The Zn(2+) site is built by histidine 573, histidine 577, cysteine 676, and histidine 680.

The protein belongs to the class-II aminoacyl-tRNA synthetase family. Zn(2+) serves as cofactor.

It localises to the cytoplasm. The enzyme catalyses tRNA(Ala) + L-alanine + ATP = L-alanyl-tRNA(Ala) + AMP + diphosphate. In terms of biological role, catalyzes the attachment of alanine to tRNA(Ala) in a two-step reaction: alanine is first activated by ATP to form Ala-AMP and then transferred to the acceptor end of tRNA(Ala). Also edits incorrectly charged Ser-tRNA(Ala) and Gly-tRNA(Ala) via its editing domain. The chain is Alanine--tRNA ligase from Corynebacterium glutamicum (strain ATCC 13032 / DSM 20300 / JCM 1318 / BCRC 11384 / CCUG 27702 / LMG 3730 / NBRC 12168 / NCIMB 10025 / NRRL B-2784 / 534).